We begin with the raw amino-acid sequence, 287 residues long: Nucleotide-binding protein VP2673 (287 aa).

Position 8 to 15 (8 to 15 (GHSGAGKS)) interacts with ATP. 56-59 (DIRN) lines the GTP pocket.

This sequence belongs to the RapZ-like family.

Its function is as follows. Displays ATPase and GTPase activities. This Vibrio parahaemolyticus serotype O3:K6 (strain RIMD 2210633) protein is Nucleotide-binding protein VP2673.